The following is a 535-amino-acid chain: cAMP-regulated D2 protein (535 aa).

Residues 1 to 20 (MNKLLVFILLLLLLINISFA) form the signal peptide. C89 and C109 are joined by a disulfide. S213 (acyl-ester intermediate) is an active-site residue. C265 and C272 are disulfide-bonded. Active-site charge relay system residues include E338 and H440. N500 carries an N-linked (GlcNAc...) asparagine glycan.

It belongs to the type-B carboxylesterase/lipase family.

It localises to the cytoplasmic vesicle. It is found in the esterosome membrane. The protein is cAMP-regulated D2 protein (D2) of Dictyostelium discoideum (Social amoeba).